Here is a 105-residue protein sequence, read N- to C-terminus: Large ribosomal subunit protein bL21 (105 aa).

The protein belongs to the bacterial ribosomal protein bL21 family. In terms of assembly, part of the 50S ribosomal subunit. Contacts protein L20.

In terms of biological role, this protein binds to 23S rRNA in the presence of protein L20. In Rhizobium rhizogenes (strain K84 / ATCC BAA-868) (Agrobacterium radiobacter), this protein is Large ribosomal subunit protein bL21.